A 488-amino-acid chain; its full sequence is Glutamyl-tRNA(Gln) amidotransferase subunit A (488 aa).

Catalysis depends on charge relay system residues lysine 77 and serine 152. Serine 176 (acyl-ester intermediate) is an active-site residue.

It belongs to the amidase family. GatA subfamily. In terms of assembly, heterotrimer of A, B and C subunits.

It catalyses the reaction L-glutamyl-tRNA(Gln) + L-glutamine + ATP + H2O = L-glutaminyl-tRNA(Gln) + L-glutamate + ADP + phosphate + H(+). In terms of biological role, allows the formation of correctly charged Gln-tRNA(Gln) through the transamidation of misacylated Glu-tRNA(Gln) in organisms which lack glutaminyl-tRNA synthetase. The reaction takes place in the presence of glutamine and ATP through an activated gamma-phospho-Glu-tRNA(Gln). This is Glutamyl-tRNA(Gln) amidotransferase subunit A from Streptococcus pyogenes serotype M4 (strain MGAS10750).